The chain runs to 440 residues: MSTPTPKVGFVSLGCPKALVDSERILTQLRMEGYEVVPTYEDADVVVVNTCGFIDSAKAESLEVIGEAIAENGKVIVTGCMGVEEHTIRDVHPSVLAVTGPQQYEQVVTAVHEVVPPKTEHNPLVDLVPPQGVKLTPRHYAYLKISEGCNHSCSFCIIPSMRGKLVSRPVGDVLSEAERLVKAGVKELLVISQDTSAYGVDLKYKTDFWNGQPVKTRMKELCEALSSMGVWVRLHYVYPYPNVDDVIPLMAAGKLLPYLDIPFQHASPKVLKAMKRPAFEDKTLARIKQWREICPELTIRSTFIVGFPGETEEDFQYLLDWLTEAQLDRVGCFQYSPVEGAPANELGLEPVPDEVKQDRWERFMAHQQAISAARLQLKVGKEIEVLIDEVDEQGAVGRSWADAPEIDGNVFVDSDELKPGDKVRVRITDADEYDLWAELV.

Residues 6–116 enclose the MTTase N-terminal domain; the sequence is PKVGFVSLGC…VVTAVHEVVP (111 aa). The [4Fe-4S] cluster site is built by Cys15, Cys51, Cys80, Cys149, Cys153, and Cys156. One can recognise a Radical SAM core domain in the interval 135–373; it reads LTPRHYAYLK…MAHQQAISAA (239 aa). The TRAM domain maps to 376-440; it reads QLKVGKEIEV…DEYDLWAELV (65 aa).

The protein belongs to the methylthiotransferase family. RimO subfamily. Requires [4Fe-4S] cluster as cofactor.

It is found in the cytoplasm. The catalysed reaction is L-aspartate(89)-[ribosomal protein uS12]-hydrogen + (sulfur carrier)-SH + AH2 + 2 S-adenosyl-L-methionine = 3-methylsulfanyl-L-aspartate(89)-[ribosomal protein uS12]-hydrogen + (sulfur carrier)-H + 5'-deoxyadenosine + L-methionine + A + S-adenosyl-L-homocysteine + 2 H(+). Its function is as follows. Catalyzes the methylthiolation of an aspartic acid residue of ribosomal protein uS12. This is Ribosomal protein uS12 methylthiotransferase RimO from Pseudomonas aeruginosa (strain UCBPP-PA14).